The sequence spans 299 residues: Bifunctional protein FolD (299 aa).

NADP(+) is bound by residues 168–170 (GRS), Ser193, and Ile234.

This sequence belongs to the tetrahydrofolate dehydrogenase/cyclohydrolase family. In terms of assembly, homodimer.

It carries out the reaction (6R)-5,10-methylene-5,6,7,8-tetrahydrofolate + NADP(+) = (6R)-5,10-methenyltetrahydrofolate + NADPH. It catalyses the reaction (6R)-5,10-methenyltetrahydrofolate + H2O = (6R)-10-formyltetrahydrofolate + H(+). It functions in the pathway one-carbon metabolism; tetrahydrofolate interconversion. Its function is as follows. Catalyzes the oxidation of 5,10-methylenetetrahydrofolate to 5,10-methenyltetrahydrofolate and then the hydrolysis of 5,10-methenyltetrahydrofolate to 10-formyltetrahydrofolate. This is Bifunctional protein FolD from Brucella anthropi (strain ATCC 49188 / DSM 6882 / CCUG 24695 / JCM 21032 / LMG 3331 / NBRC 15819 / NCTC 12168 / Alc 37) (Ochrobactrum anthropi).